A 102-amino-acid chain; its full sequence is UPF0213 protein Ent638_3592 (102 aa).

Residues 4-79 (VCWFLYLVRT…KQLTKRQKER (76 aa)) form the GIY-YIG domain.

It belongs to the UPF0213 family.

The protein is UPF0213 protein Ent638_3592 of Enterobacter sp. (strain 638).